Consider the following 99-residue polypeptide: Protein translation factor SUI1 homolog (99 aa).

This sequence belongs to the SUI1 family.

This chain is Protein translation factor SUI1 homolog, found in Sulfolobus acidocaldarius (strain ATCC 33909 / DSM 639 / JCM 8929 / NBRC 15157 / NCIMB 11770).